A 589-amino-acid chain; its full sequence is BTB/POZ domain and ankyrin repeat-containing protein NPR3 (589 aa).

A disordered region spans residues 1–25 (METSTISFSSSSPPSPPPPQPAPGD). A compositionally biased stretch (pro residues) spans 13–22 (PPSPPPPQPA). Positions 52–137 (AEIVLASGGG…LYTGRLRSAP (86 aa)) constitute a BTB domain. A C2HC NPR-type zinc finger spans residues 140 to 154 (AAACLDDGCSHDACR). Zn(2+) is bound by residues cysteine 143, cysteine 148, histidine 150, and cysteine 153. ANK repeat units lie at residues 260 to 290 (KRVR…TLDD), 292 to 319 (FAIH…NVNL), and 323 to 352 (SGYT…SVLE). The salicylic acid-binding core (SBC) stretch occupies residues 382 to 521 (ERSKAYLCIG…LDKFLNEEST (140 aa)). Salicylate is bound at residue arginine 433. Residues 555-589 (DKAAGAAISSSTSASSSPRYETKLRPGNKKGKLSR) form a disordered region. Residues 558-571 (AGAAISSSTSASSS) are compositionally biased toward low complexity. Residues 580 to 589 (PGNKKGKLSR) show a composition bias toward basic residues.

The protein belongs to the plant 'ANKYRIN-BTB/POZ' family. 'NPR1-like' subfamily. As to quaternary structure, interacts with TGA2.1, TGA2.2, TGA2.3, LG2, TGAL1, TGAL4, NRR, RH1, RH2 and RH3.

The protein localises to the nucleus. The protein operates within protein modification; protein ubiquitination. In terms of biological role, salicylic acid (SA)-binding substrate-specific adapter of an E3 ubiquitin-protein ligase complex (CUL3-RBX1-BTB) which mediates the ubiquitination and subsequent proteasomal degradation of target proteins. Involved in defense response against the bacterial blight disease caused by Xanthomonas oryzae pv. oryzae (Xoo). Plants expressing an NPR3/NH3 transgene driven by its native promoter show enhanced resistance to the Xoo pathogen, and exhibit elevated sensitivity to benzothiadiazole (BTH) treatment and enhanced induction of defense-related genes upon treatment with BTH. Intriguingly, constitutive over-expression of NPR3/NH3 with a ubiquitin promoter does not confer disease resistance to Xoo. This Oryza sativa subsp. japonica (Rice) protein is BTB/POZ domain and ankyrin repeat-containing protein NPR3.